Here is a 104-residue protein sequence, read N- to C-terminus: Large ribosomal subunit protein uL24 (104 aa).

This sequence belongs to the universal ribosomal protein uL24 family. In terms of assembly, part of the 50S ribosomal subunit.

In terms of biological role, one of two assembly initiator proteins, it binds directly to the 5'-end of the 23S rRNA, where it nucleates assembly of the 50S subunit. Functionally, one of the proteins that surrounds the polypeptide exit tunnel on the outside of the subunit. The chain is Large ribosomal subunit protein uL24 from Citrobacter koseri (strain ATCC BAA-895 / CDC 4225-83 / SGSC4696).